Reading from the N-terminus, the 207-residue chain is M-zodatoxin-Lt4a (207 aa).

The signal sequence occupies residues 1 to 22; it reads MKFSIIALALAVAFVCVAESRS. A propeptide spanning residues 23-43 is cleaved from the precursor; that stretch reads EEEGYDVSEEIQAEELEEAER. The Processing quadruplet motif 1 motif lies at 40 to 43; it reads EAER. At Q61 the chain carries Glutamine amide. Residues 63–66 carry the Inverted processing quadruplet motif 1 motif; that stretch reads REDS. The propeptide occupies 63-71; it reads REDSEEAGR. The Processing quadruplet motif 2 signature appears at 68-71; sequence EAGR. Glutamine amide is present on Q89. Residues 91–94 carry the Inverted processing quadruplet motif 2 motif; that stretch reads REDS. Positions 91 to 99 are excised as a propeptide; that stretch reads REDSEEAGR. The short motif at 96 to 99 is the Processing quadruplet motif 3 element; sequence EAGR. Q117 carries the glutamine amide modification. An Inverted processing quadruplet motif 3 motif is present at residues 119 to 122; sequence REDS. A propeptide spanning residues 119 to 127 is cleaved from the precursor; that stretch reads REDSEEAGR. The Processing quadruplet motif 4 motif lies at 124–127; that stretch reads EAGR. Glutamine amide is present on Q145. Residues 147-150 carry the Inverted processing quadruplet motif 4 motif; sequence REDS. Positions 147–155 are excised as a propeptide; it reads REDSEEAGR. Positions 152–155 match the Processing quadruplet motif 5 motif; it reads EAGR. A Glutamine amide modification is found at Q173. The Inverted processing quadruplet motif 5 motif lies at 175–178; it reads REDT. Positions 175 to 182 are excised as a propeptide; that stretch reads REDTEEAR. A Processing quadruplet motif 6 motif is present at residues 179–182; it reads EEAR. F206 bears the Phenylalanine amide mark.

This sequence belongs to the cationic peptide 03 (latarcin) family. 04 subfamily. Post-translationally, cleavage of the propeptide depends on the processing quadruplet motif (PQM) (XXXR, with at least one of X being E) and the inverted PQM (RXXX, with at least one of X being E). In terms of tissue distribution, expressed by the venom gland.

The protein resides in the secreted. In terms of biological role, M-zodatoxin-Lt4a: Has antimicrobial activity against Gram-positive bacteria (A.globiformis VKM Ac-1112 (MIC=0.3 uM), and B.subtilis VKM B-501 (MIC=1.1 uM)), Gram-negative bacteria (E.coli DH5-alpha (MIC=4.5 uM), E.coli MH1 (MIC=3.2 uM), and P.aeruginosa PAO1 (MIC&gt;35 uM)), and yeasts (P.pastoris GS115 (MIC=36 uM), and S.cerevisiae Y190 (MIC=18 uM)). Does not have hemolytic activity against rabbit erythrocytes. Causes paralysis, but is not lethal when injected into insect (M.domestica) larvae. Its function is as follows. Shows no antimicrobial activity against Gram-positive bacterium B.subtilis B-501 or Gram-negative bacterium E.coli DH5-alpha at concentrations up to 20 uM. Functionally, shows no antimicrobial activity against Gram-positive bacterium B.subtilis B-501 or Gram-negative bacterium E.coli DH5-alpha at concentrations up to 20 uM. Shows no toxicity towards insect (S.carnaria) larvae. The polypeptide is M-zodatoxin-Lt4a (Lachesana tarabaevi (Spider)).